A 552-amino-acid chain; its full sequence is Urocanate hydratase (552 aa).

NAD(+) is bound by residues 49-50 (GG), Gln127, 173-175 (GMG), Asp193, 239-240 (NA), 260-264 (QTSAH), 270-271 (YI), and Tyr319. Cys407 is an active-site residue. Residue Gly489 participates in NAD(+) binding.

It belongs to the urocanase family. NAD(+) serves as cofactor.

The protein resides in the cytoplasm. The enzyme catalyses 4-imidazolone-5-propanoate = trans-urocanate + H2O. It participates in amino-acid degradation; L-histidine degradation into L-glutamate; N-formimidoyl-L-glutamate from L-histidine: step 2/3. Catalyzes the conversion of urocanate to 4-imidazolone-5-propionate. This is Urocanate hydratase from Bacillus mycoides (strain KBAB4) (Bacillus weihenstephanensis).